A 165-amino-acid chain; its full sequence is Crossover junction endodeoxyribonuclease RuvC (165 aa).

Active-site residues include D7, E68, and H142. Mg(2+)-binding residues include D7, E68, and H142.

Belongs to the RuvC family. As to quaternary structure, homodimer which binds Holliday junction (HJ) DNA. The HJ becomes 2-fold symmetrical on binding to RuvC with unstacked arms; it has a different conformation from HJ DNA in complex with RuvA. In the full resolvosome a probable DNA-RuvA(4)-RuvB(12)-RuvC(2) complex forms which resolves the HJ. The cofactor is Mg(2+).

Its subcellular location is the cytoplasm. The enzyme catalyses Endonucleolytic cleavage at a junction such as a reciprocal single-stranded crossover between two homologous DNA duplexes (Holliday junction).. The RuvA-RuvB-RuvC complex processes Holliday junction (HJ) DNA during genetic recombination and DNA repair. Endonuclease that resolves HJ intermediates. Cleaves cruciform DNA by making single-stranded nicks across the HJ at symmetrical positions within the homologous arms, yielding a 5'-phosphate and a 3'-hydroxyl group; requires a central core of homology in the junction. The consensus cleavage sequence is 5'-(A/T)TT(C/G)-3'. Cleavage occurs on the 3'-side of the TT dinucleotide at the point of strand exchange. HJ branch migration catalyzed by RuvA-RuvB allows RuvC to scan DNA until it finds its consensus sequence, where it cleaves and resolves the cruciform DNA. In Anaplasma marginale (strain St. Maries), this protein is Crossover junction endodeoxyribonuclease RuvC.